Here is a 105-residue protein sequence, read N- to C-terminus: Cuticle protein AM1159 (105 aa).

Residues 16–81 (DGNFNYNFQT…PESPLLPVGP (66 aa)) form the Chitin-binding type R&amp;R domain. Residues 25–46 (TSNGIEDTKTGTPGSQGQSNMQ) form a disordered region.

Arthrodial membrane.

This chain is Cuticle protein AM1159, found in Cancer pagurus (Rock crab).